Here is a 182-residue protein sequence, read N- to C-terminus: U1 small nuclear ribonucleoprotein C (182 aa).

A Matrin-type zinc finger spans residues 4 to 36; it reads YLCDYCQVWLTHDSQSVRKAHNAGRAHIQNVQD. The segment at 129 to 182 is disordered; sequence PQTTASSNTQLTQQQQSLPQTNEHQRARTHSNANNHFTKTHHQGQRSHQRFVRA. A compositionally biased stretch (low complexity) spans 130-150; sequence QTTASSNTQLTQQQQSLPQTN. The span at 166–182 shows a compositional bias: basic residues; sequence TKTHHQGQRSHQRFVRA.

This sequence belongs to the U1 small nuclear ribonucleoprotein C family. U1 snRNP is composed of the 7 core Sm proteins smb1, smd1, smd2, smd3, sme1, smf1 and smg1 (Sm proteins B, D1, D2, D3, E, F and G, respectively) that assemble in a heptameric protein ring on the Sm site of the small nuclear RNA to form the core snRNP, and at least 9 U1 snRNP-specific proteins usp101/U1-70K, usp102/U1-A, usp103/U1-C, usp106/LUC7, usp105/PRP39, usp104/PRP40, usp107/U1-H, usp108/U1-J and usp109/U1-L. usp103/U1-C interacts with U1 snRNA and the 5' splice-site region of the pre-mRNA.

It localises to the nucleus. Its function is as follows. Component of the spliceosomal U1 snRNP, which is essential for recognition of the pre-mRNA 5' splice-site and the subsequent assembly of the spliceosome. usp103/U1-C is directly involved in initial 5' splice-site recognition for both constitutive and regulated alternative splicing. The interaction with the 5' splice-site seems to precede base-pairing between the pre-mRNA and the U1 snRNA. Stimulates commitment or early (E) complex formation by stabilizing the base pairing of the 5' end of the U1 snRNA and the 5' splice-site region. This Schizosaccharomyces pombe (strain 972 / ATCC 24843) (Fission yeast) protein is U1 small nuclear ribonucleoprotein C (usp103).